The following is a 107-amino-acid chain: Large ribosomal subunit protein uL24 (107 aa).

Belongs to the universal ribosomal protein uL24 family. As to quaternary structure, part of the 50S ribosomal subunit.

In terms of biological role, one of two assembly initiator proteins, it binds directly to the 5'-end of the 23S rRNA, where it nucleates assembly of the 50S subunit. One of the proteins that surrounds the polypeptide exit tunnel on the outside of the subunit. This is Large ribosomal subunit protein uL24 from Thiobacillus denitrificans (strain ATCC 25259 / T1).